The following is a 1328-amino-acid chain: Protein turtle homolog B (1328 aa).

The N-terminal stretch at 1–20 is a signal peptide; sequence MIWYVATLIASVISTRGLVA. The Extracellular segment spans residues 21 to 722; sequence QVAHGLREEP…DLTDDGLARP (702 aa). 5 consecutive Ig-like domains span residues 30–115, 139–226, 228–320, 324–415, and 420–504; these read PEFV…ECKV, PTFT…LLVQ, PPFI…AYLT, PARV…ARLV, and PYFT…THLT. 2 cysteine pairs are disulfide-bonded: Cys-45-Cys-113 and Cys-161-Cys-208. Residues Asn-241 and Asn-258 are each glycosylated (N-linked (GlcNAc...) asparagine). Cystine bridges form between Cys-250–Cys-303, Cys-346–Cys-397, and Cys-442–Cys-488. Fibronectin type-III domains are found at residues 512–604 and 614–708; these read APGS…TLAF and LVTP…STDI. N-linked (GlcNAc...) asparagine glycosylation is present at Asn-624. Residues 723 to 743 form a helical membrane-spanning segment; the sequence is VLAGIVATICFLAAAILFSTL. Residues 744-1328 lie on the Cytoplasmic side of the membrane; that stretch reads AACFVNKQRK…EPPTTLPTSG (585 aa). Disordered stretches follow at residues 758–817, 914–1040, and 1107–1328; these read RKKD…EKEL, PMSS…PEPW, and SPGR…PTSG. 3 positions are modified to phosphoserine: Ser-775, Ser-783, and Ser-794. Residues 990-1001 show a composition bias toward low complexity; it reads SPLSSVMSSPPL. 3 stretches are compositionally biased toward polar residues: residues 1018-1033, 1129-1141, and 1199-1214; these read ENAS…TPTG, LVSQ…TSQG, and SRLS…SRTG. An Omega-N-methylarginine modification is found at Arg-1136. A phosphoserine mark is found at Ser-1207 and Ser-1215. The segment covering 1246–1273 has biased composition (low complexity); the sequence is SFSRKSTPSSTGSPSQSSRSGSPSYRPT. Composition is skewed to pro residues over residues 1284–1295 and 1318–1328; these read PSPPPGPAPPAP and PEPPTTLPTSG.

Belongs to the immunoglobulin superfamily. Turtle family. Found in a complex with MAGI2 and NLGN2, where it interacts with MAGI2 (via PDZ 5 and PDZ 6 domains). In terms of processing, N-glycosylated and sialylated. Not significantly O-glycosylated. As to expression, detected primarily in brain, including cortex, hippocampus, cerebellum and striatum. Largely restricted to inhibitory GABAergic interneurons (at protein level).

It localises to the postsynaptic cell membrane. Its subcellular location is the postsynaptic density. In terms of biological role, transmembrane protein which is abundantly expressed in interneurons, where it may regulate inhibitory synapse development. May mediate homophilic cell adhesion. This Rattus norvegicus (Rat) protein is Protein turtle homolog B.